Consider the following 109-residue polypeptide: Acylphosphatase (109 aa).

The Acylphosphatase-like domain maps to 22–109 (RLRARVEGVV…GEFSSFDVVY (88 aa)). Catalysis depends on residues R37 and N55.

The protein belongs to the acylphosphatase family.

It carries out the reaction an acyl phosphate + H2O = a carboxylate + phosphate + H(+). This Arthrobacter sp. (strain FB24) protein is Acylphosphatase (acyP).